The following is a 146-amino-acid chain: Hemoglobin cathodic subunit beta (146 aa).

In terms of domain architecture, Globin spans 2 to 146 (QWSSSERSTI…VVSALSRQYF (145 aa)). Positions 63 and 92 each coordinate heme b.

The protein belongs to the globin family. As to quaternary structure, heterotetramer of two alpha chains and two beta chains. In terms of tissue distribution, red blood cells.

In terms of biological role, involved in oxygen transport from the gills to the various peripheral tissues. The protein is Hemoglobin cathodic subunit beta of Conger conger (Conger eel).